The following is a 465-amino-acid chain: Ribosomal oxygenase 2 (465 aa).

The region spanning 139–271 (QPQRFKDELW…NSWGDYLLDS (133 aa)) is the JmjC domain. Fe cation-binding residues include H179, D181, and H240. S309 carries the post-translational modification Phosphoserine.

This sequence belongs to the ROX family. MINA53 subfamily. Fe(2+) is required as a cofactor.

The protein localises to the nucleus. Its subcellular location is the nucleolus. It carries out the reaction L-histidyl-[ribosomal protein uL15] + 2-oxoglutarate + O2 = (3S)-3-hydroxy-L-histidyl-[ribosomal protein uL15] + succinate + CO2. The enzyme catalyses L-histidyl-[protein] + 2-oxoglutarate + O2 = (3S)-3-hydroxy-L-histidyl-[protein] + succinate + CO2. Oxygenase that can act as both a histone lysine demethylase and a ribosomal histidine hydroxylase. Is involved in the demethylation of trimethylated 'Lys-9' on histone H3 (H3K9me3), leading to an increase in ribosomal RNA expression. Also catalyzes the hydroxylation of 60S ribosomal protein L27a on 'His-39'. May play an important role in cell growth and survival. May be involved in ribosome biogenesis, most likely during the assembly process of pre-ribosomal particles. The protein is Ribosomal oxygenase 2 of Rattus norvegicus (Rat).